Here is a 2293-residue protein sequence, read N- to C-terminus: MKGHQFKSWIFELREIVREIKNSHYFLDSWTQFNSVGSFIHIFFHQERFRKLLDPRIFSILLLRNSQGSTSNRYFTIKGVVLFVVAALLYRINNRNMVESKNLYLKGLLPIPMNSIGPRNDTSEESFGSSNINRLIVSLLYLTKGKKISESCFRDPKESTWVLPITQKFIMPESNWSSRWWRNWIGKKRDFCCKISNETVAGIYISFKEKDFKYLEFLFVYYMDDPIRKGHDWELFDRLSPSKRRNIINLNSGQLFEILVKDWICYLMFAFREKIPIEVEGFFKQQGAGSTIQSNDIEPVSHLFSRNKWAISLQNCAQFHMWQFHQDLFVSWGKNPHESDFLRKISRENWIWLDNVWLVNKDRFFSKVRNVSSNIQYDSTRSSFVQVTDSSQLNGSSDQFIDPFDSISNEDSEYHTLINQREIQQLKERSILLDPSFIQTEGREIESDRFPKYLSGYSSMPRLFTEREKRMNNHLLPEESEEFLGNPTRAIRSFFSDRWSELHLGSNPTERSTRDQKLLKKEQDVSFVPSRRSENKEIVNIFKIITYLQNTVSIHPISSDLGCDMVPKDELDMDSSNKISFLNKNPFFDLFHLFHERKRGGYTLRHDFESEERFQEMADLFTLSITEPDLVYHKGFAFSIDSYGLDQRQFLKEVFNSRDESKKKSLLVLPPIFYEENESFYRRIRKNWVRISCGNYLEDPKPKRVVFASNNIMEAVNQYRLIRNLIQIQFQYSPYGYIRNVLNRFFLMKRPDRNFEYGIQRDLIGNDTLNHRTIMKDTINQHLSNLKKSQKKRFDPLIFLSRTERSINRDPNAYRYKWSNGSKNFQEHLEHFVSERKSRFQVVFDRLCINQYSIDWSEVIDKKDLSKSLRFFLSKLLRFFLSKLLLFLSKLLLFLSNSLPFFFVSFENIPIHRSEIHIYELKGPNDQLCNQLLESIGLRIVHLKKLKPFLLDDHNTSQESEFLINGGTISPFLFNKIPKWMIDSFHTRKNRRKSFDNTDSYFSIVSHDQDNWLNPVKPFQRSSLISSFSKANRLRFLNNPHHFCFYCNKRFPFYVEKARLNNSDFTYGQFLTILFIHNKIFSSCGGKKKHAFLERDTISPSSIESQVSNIFISNDFPQSGDERYNLYKSFHFPIRSDPLVRRAIYSIADISGTPLIEGQRVNFERTYCQTLSDMNLSDSEEKSLHQYLNFNSNMGLIHTPCSEKYLQRKKRSLCLKKCVDKGQMDRTFQRDSAFSTLSKWNLFQTYMPWFFTSTGYKYLNLIFLDTFSDLLRILSSSQKFVSIFHDIMHGLDISWRILQKKLCLPQRNLISEISSKSLHNLLLSEEMIHPNNESSLISTHLRSPNVREVLYSILFLLLVAGYIVRTHLLFVSRAYSELQTEFEKIKSLMIPSYMIELRKLLDRYPTSELNSFWLKNLFLVALEQLGDCLEEIRGSGGNMLWGGDPAYGVKSIRSKKKDLKINFIDIIDLISIIPNPINRITFSRNTRHLSHTSKDIYSLIRKRKNVSGDWIDDKIESWVANSDSIDDKEREFLVQFSTLRAEKRIDQILLSLTHSDHLSKNDSGYQMIEQPGTIYLRYLVDIHKKSLMNYEFNTSCLAERRIFLAHYQTITYSQTSRGANSFHFPSHGKPFSLRLALSPSRSILVIGSIGTGRSYLVKYLATNSYVPFITVFLNKFLDNKPKGFFIDDIDIDDSDDIDASNDIDRELDTELELLTMMNALTMDMMSEIDRFYITLQFELAKAMSPCIIWIPNIHDLDVNESNYLALGLLVNSLSRDCERCSTRNILVIASTHIPQKVDPALIAPNKLNTCIKIRRLLIPQQRKHFFTLSYTRGFHLEKKMFHTNGFESITMGSSARDLVALTNEALSISITQKKSIIDTNTIRSALHRQTWDLRSQVRSVQDHGILFYQIGRAVAQNVLISNCPIDPISIYMKKKSCNEGDSYLYKWYFELGTSMKKFTILLYLLSCSAGLVAQDLWSLPGPDEKNRITSYGFIENDSDLVHGLLEVQGALVGSSRTEKDCSQFDNDRVTLLFRSEPRDPLYMMQDGSCSIVDQRFLYEKYESEFEEGEGEGVLDPQQIEEDLFNHIVWAPRIWRPRGFLFDCIERPNELGFPYLAGSFRGKQIIYDEKYELQENDSEFLQSGTMQYQRRDRSSKEQGFFRISQFIWDPADPLFFLFKDQPFVSVFSHREFFADEEMSKGLLTSQTDPPTSIYKRWFIKNTQEKHFELLIQRQRWLRTNSSLSNGFFRSNTLSESYQYLSNLFLSNGTLLDRMTKTLLKKRWLFPDEMKIGFM.

Glycine 1647–serine 1654 contacts ATP.

It belongs to the Ycf2 family.

It localises to the plastid. The protein resides in the chloroplast stroma. Probable ATPase of unknown function. Its presence in a non-photosynthetic plant (Epifagus virginiana) and experiments in tobacco indicate that it has an essential function which is probably not related to photosynthesis. This chain is Protein Ycf2, found in Lobularia maritima (Sweet alyssum).